We begin with the raw amino-acid sequence, 376 residues long: Phytanoyl-CoA hydroxylase-interacting protein-like (376 aa).

The region spanning 52-161 is the Fibronectin type-III domain; sequence VPHNIKISNI…EIIEFCTADY (110 aa).

Belongs to the PHYHIP family.

May play a role in the development of the central system. In Xenopus tropicalis (Western clawed frog), this protein is Phytanoyl-CoA hydroxylase-interacting protein-like (phyhipl).